We begin with the raw amino-acid sequence, 190 residues long: Peptidyl-tRNA hydrolase (190 aa).

Y14 is a binding site for tRNA. Catalysis depends on H19, which acts as the Proton acceptor. TRNA is bound by residues Y64 and N66.

The protein belongs to the PTH family. As to quaternary structure, monomer.

It localises to the cytoplasm. The enzyme catalyses an N-acyl-L-alpha-aminoacyl-tRNA + H2O = an N-acyl-L-amino acid + a tRNA + H(+). In terms of biological role, hydrolyzes ribosome-free peptidyl-tRNAs (with 1 or more amino acids incorporated), which drop off the ribosome during protein synthesis, or as a result of ribosome stalling. Catalyzes the release of premature peptidyl moieties from peptidyl-tRNA molecules trapped in stalled 50S ribosomal subunits, and thus maintains levels of free tRNAs and 50S ribosomes. The sequence is that of Peptidyl-tRNA hydrolase from Rhodopirellula baltica (strain DSM 10527 / NCIMB 13988 / SH1).